The primary structure comprises 390 residues: Methylthioribose-1-phosphate isomerase (390 aa).

Substrate is bound by residues 53–55 (RGA), Arg90, and Gln207. Catalysis depends on Asp248, which acts as the Proton donor. 258 to 259 (NK) is a substrate binding site.

It belongs to the EIF-2B alpha/beta/delta subunits family. MtnA subfamily.

The catalysed reaction is 5-(methylsulfanyl)-alpha-D-ribose 1-phosphate = 5-(methylsulfanyl)-D-ribulose 1-phosphate. The enzyme catalyses 5-deoxy-alpha-D-ribose 1-phosphate = 5-deoxy-D-ribulose 1-phosphate. Its pathway is amino-acid biosynthesis; L-methionine biosynthesis via salvage pathway; L-methionine from S-methyl-5-thio-alpha-D-ribose 1-phosphate: step 1/6. Catalyzes the interconversion of methylthioribose-1-phosphate (MTR-1-P) into methylthioribulose-1-phosphate (MTRu-1-P). Also catalyzes the interconversion of 5-deoxyribose 1-phosphate and 5-deoxyribulose 1-phosphate. Part of a bifunctional DHAP-shunt salvage pathway for SAM by-products. The sequence is that of Methylthioribose-1-phosphate isomerase from Rhodospirillum rubrum (strain ATCC 11170 / ATH 1.1.1 / DSM 467 / LMG 4362 / NCIMB 8255 / S1).